Here is a 350-residue protein sequence, read N- to C-terminus: Small ribosomal subunit biogenesis GTPase RsgA (350 aa).

Positions 1–17 (MSKNKLSKGQQRRVNAN) are enriched in polar residues. The segment at 1-27 (MSKNKLSKGQQRRVNANHQRRLKTSAE) is disordered. A CP-type G domain is found at 104–273 (TSVLTRPDFY…VIDSPGVREF (170 aa)). GTP-binding positions include 160–163 (NKID) and 214–222 (GQSGVGKSS). The Zn(2+) site is built by C297, C302, H304, and C310.

The protein belongs to the TRAFAC class YlqF/YawG GTPase family. RsgA subfamily. Monomer. Associates with 30S ribosomal subunit, binds 16S rRNA. Zn(2+) serves as cofactor.

It localises to the cytoplasm. Its function is as follows. One of several proteins that assist in the late maturation steps of the functional core of the 30S ribosomal subunit. Helps release RbfA from mature subunits. May play a role in the assembly of ribosomal proteins into the subunit. Circularly permuted GTPase that catalyzes slow GTP hydrolysis, GTPase activity is stimulated by the 30S ribosomal subunit. The chain is Small ribosomal subunit biogenesis GTPase RsgA from Salmonella dublin (strain CT_02021853).